A 297-amino-acid polypeptide reads, in one-letter code: ClpXP adapter protein SpxH (297 aa).

Belongs to the SpxH family. Interacts with Spx.

Its subcellular location is the cytoplasm. Functionally, adapter protein required for efficient degradation of Spx by ClpXP under non-stress conditions. Interaction with Spx stabilizes Spx and exposes the C-terminus of Spx for recognition and proteolysis by ClpXP. This Bacillus cereus (strain ATCC 10987 / NRS 248) protein is ClpXP adapter protein SpxH.